The following is a 564-amino-acid chain: MSVQQLISRLTDIVGSRYIITDPTKTEAYRSGYRFGTGNALAVVRPATLLEFWNIVKVCVEHDVIVINQAANTGLTGGSTPDGNDYDRDIVVINTMRIDGIQLINNASQVICLPGSTLNELENQLKPFGREPHSVIGSSCIGASVIGGICNNSGGALVQRGPAYTEMALYAQLNEKGELELKNHLGIDLGETPEEILTNLQEKRYQVKDIRQDCGHGHDHYYCNYVRQVDEGSPARFNADPARHYEASGCAGKLAVFAVRLDTFPLEKETAVFYIGTNQTSVLSDIRRHMLVNFEVLPISGEYIHRDAFDIAAKYGKDTFWVIKKFGTHWLPKLFSLKSNVDRIGKKFFFLPQHLSDKFMQTVSKFIPEHLPQSLWDYRNKYEHHLIIKMGGKGIQEAREYLESYIADGSKGGYFECNAIETQAAMLHRFAVASAAIRYRAIHEKEVEEIVALDVALRRNDQDWFEVLPPEIDNRIISKLYYGHFMCHVFHQDYIVKKGYDYEELEYEMLKLLDKRGAQYPAEHNVGHLYEAKPTLRKFYKELDPTNSFNPGIGKTTRKKYWAE.

An FAD-binding PCMH-type domain is found at 36-207 (GTGNALAVVR…TNLQEKRYQV (172 aa)). FAD is bound by residues 70–74 (AANTG), 78–79 (GS), Gly137, Ser144, Gly154, and Val256.

The protein belongs to the quinone-dependent D-lactate dehydrogenase family. It depends on FAD as a cofactor.

The protein resides in the cell inner membrane. The enzyme catalyses (R)-lactate + a quinone = a quinol + pyruvate. Catalyzes the oxidation of D-lactate to pyruvate. This Haemophilus influenzae (strain ATCC 51907 / DSM 11121 / KW20 / Rd) protein is Quinone-dependent D-lactate dehydrogenase.